Here is a 264-residue protein sequence, read N- to C-terminus: Zinc import ATP-binding protein ZnuC (264 aa).

Residues 20–235 (VQLKNIEVTF…PNFIHFFGDQ (216 aa)) enclose the ABC transporter domain. 52-59 (GPNGGGKS) lines the ATP pocket.

The protein belongs to the ABC transporter superfamily. Zinc importer (TC 3.A.1.15.5) family. The complex is composed of two ATP-binding proteins (ZnuC), two transmembrane proteins (ZnuB) and a solute-binding protein (ZnuA).

It is found in the cell inner membrane. The catalysed reaction is Zn(2+)(out) + ATP(in) + H2O(in) = Zn(2+)(in) + ADP(in) + phosphate(in) + H(+)(in). Functionally, part of the ABC transporter complex ZnuABC involved in zinc import. Responsible for energy coupling to the transport system. This Haemophilus ducreyi (strain 35000HP / ATCC 700724) protein is Zinc import ATP-binding protein ZnuC.